A 334-amino-acid polypeptide reads, in one-letter code: Holliday junction branch migration complex subunit RuvB (334 aa).

Residues A4–Y184 are large ATPase domain (RuvB-L). ATP contacts are provided by residues I23, R24, G65, K68, T69, T70, E131–Y133, R174, Y184, and R221. T69 serves as a coordination point for Mg(2+). The tract at residues Q185–N255 is small ATPAse domain (RuvB-S). Residues A258–E334 form a head domain (RuvB-H) region. 3 residues coordinate DNA: R294, R313, and R318.

This sequence belongs to the RuvB family. As to quaternary structure, homohexamer. Forms an RuvA(8)-RuvB(12)-Holliday junction (HJ) complex. HJ DNA is sandwiched between 2 RuvA tetramers; dsDNA enters through RuvA and exits via RuvB. An RuvB hexamer assembles on each DNA strand where it exits the tetramer. Each RuvB hexamer is contacted by two RuvA subunits (via domain III) on 2 adjacent RuvB subunits; this complex drives branch migration. In the full resolvosome a probable DNA-RuvA(4)-RuvB(12)-RuvC(2) complex forms which resolves the HJ.

It is found in the cytoplasm. It catalyses the reaction ATP + H2O = ADP + phosphate + H(+). The RuvA-RuvB-RuvC complex processes Holliday junction (HJ) DNA during genetic recombination and DNA repair, while the RuvA-RuvB complex plays an important role in the rescue of blocked DNA replication forks via replication fork reversal (RFR). RuvA specifically binds to HJ cruciform DNA, conferring on it an open structure. The RuvB hexamer acts as an ATP-dependent pump, pulling dsDNA into and through the RuvAB complex. RuvB forms 2 homohexamers on either side of HJ DNA bound by 1 or 2 RuvA tetramers; 4 subunits per hexamer contact DNA at a time. Coordinated motions by a converter formed by DNA-disengaged RuvB subunits stimulates ATP hydrolysis and nucleotide exchange. Immobilization of the converter enables RuvB to convert the ATP-contained energy into a lever motion, pulling 2 nucleotides of DNA out of the RuvA tetramer per ATP hydrolyzed, thus driving DNA branch migration. The RuvB motors rotate together with the DNA substrate, which together with the progressing nucleotide cycle form the mechanistic basis for DNA recombination by continuous HJ branch migration. Branch migration allows RuvC to scan DNA until it finds its consensus sequence, where it cleaves and resolves cruciform DNA. The chain is Holliday junction branch migration complex subunit RuvB from Yersinia enterocolitica serotype O:8 / biotype 1B (strain NCTC 13174 / 8081).